Reading from the N-terminus, the 122-residue chain is Large ribosomal subunit protein uL14 (122 aa).

It belongs to the universal ribosomal protein uL14 family. As to quaternary structure, part of the 50S ribosomal subunit. Forms a cluster with proteins L3 and L19. In the 70S ribosome, L14 and L19 interact and together make contacts with the 16S rRNA in bridges B5 and B8.

Binds to 23S rRNA. Forms part of two intersubunit bridges in the 70S ribosome. This Mesorhizobium japonicum (strain LMG 29417 / CECT 9101 / MAFF 303099) (Mesorhizobium loti (strain MAFF 303099)) protein is Large ribosomal subunit protein uL14.